A 224-amino-acid chain; its full sequence is ATP-dependent dethiobiotin synthetase BioD (224 aa).

14 to 19 contacts ATP; it reads GIGKTV. T18 contributes to the Mg(2+) binding site. The active site involves K39. S43 serves as a coordination point for substrate. ATP is bound by residues D56, 117–120, and 177–178; these read EGVG and NE. Residues D56 and E117 each contribute to the Mg(2+) site.

Belongs to the dethiobiotin synthetase family. As to quaternary structure, homodimer. Mg(2+) serves as cofactor.

It is found in the cytoplasm. It catalyses the reaction (7R,8S)-7,8-diammoniononanoate + CO2 + ATP = (4R,5S)-dethiobiotin + ADP + phosphate + 3 H(+). It participates in cofactor biosynthesis; biotin biosynthesis; biotin from 7,8-diaminononanoate: step 1/2. Catalyzes a mechanistically unusual reaction, the ATP-dependent insertion of CO2 between the N7 and N8 nitrogen atoms of 7,8-diaminopelargonic acid (DAPA, also called 7,8-diammoniononanoate) to form a ureido ring. The polypeptide is ATP-dependent dethiobiotin synthetase BioD (Xanthomonas campestris pv. campestris (strain B100)).